A 152-amino-acid polypeptide reads, in one-letter code: Large-conductance mechanosensitive channel (152 aa).

Helical transmembrane passes span 26 to 46, 50 to 70, and 92 to 112; these read VLDLAVGVVIGAAFSAIVGSA, ILTPFIGLITGGVDFSNLFIT, and IGVFLNAVIQFLIIAFFIFWL.

It belongs to the MscL family. Homopentamer.

It localises to the cell inner membrane. Channel that opens in response to stretch forces in the membrane lipid bilayer. May participate in the regulation of osmotic pressure changes within the cell. The chain is Large-conductance mechanosensitive channel from Gluconobacter oxydans (strain 621H) (Gluconobacter suboxydans).